Here is a 425-residue protein sequence, read N- to C-terminus: Apolipoprotein N-acyltransferase (425 aa).

6 consecutive transmembrane segments (helical) span residues 12–32, 34–54, 60–80, 88–108, 120–140, and 142–162; these read LLAC…AYAI, NPYI…LAFL, SAFA…ALSF, LLPL…YLLL, FLGS…DSFF, and YSVF…CIFL. A CN hydrolase domain is found at 201-425; that stretch reads VSTKTPQDLK…LGDILFRKRS (225 aa). The active-site Proton acceptor is Glu242. The active site involves Lys296. Residue Cys349 is the Nucleophile of the active site.

This sequence belongs to the CN hydrolase family. Apolipoprotein N-acyltransferase subfamily.

It localises to the cell inner membrane. The catalysed reaction is N-terminal S-1,2-diacyl-sn-glyceryl-L-cysteinyl-[lipoprotein] + a glycerophospholipid = N-acyl-S-1,2-diacyl-sn-glyceryl-L-cysteinyl-[lipoprotein] + a 2-acyl-sn-glycero-3-phospholipid + H(+). Its pathway is protein modification; lipoprotein biosynthesis (N-acyl transfer). In terms of biological role, catalyzes the phospholipid dependent N-acylation of the N-terminal cysteine of apolipoprotein, the last step in lipoprotein maturation. The protein is Apolipoprotein N-acyltransferase of Helicobacter pylori (strain ATCC 700392 / 26695) (Campylobacter pylori).